Reading from the N-terminus, the 227-residue chain is MPPLLNALQLRLQHQFAEPALLQRAVTHRSFSADNNERLEFLGDSVLNLAISSLLYQRLSSMPEGDLSRVRANLVKEGTLHQIALRLQLPDLLRLGEGESKSGGKQRPSILADAVEALIGAVYLDAGYAAGEKVVHHLFEGVDINPHMRAAEKDAKTALQEWLQGRRMKLPQYEVVATTGAAHRQTFEVACAIAELQLQARGTGASRRAAEQTAATAMLELLKARHA.

The region spanning Leu-5–Gly-127 is the RNase III domain. Glu-40 serves as a coordination point for Mg(2+). Residue Asp-44 is part of the active site. Positions 113 and 116 each coordinate Mg(2+). Residue Glu-116 is part of the active site. Residues Asp-154–Ala-224 enclose the DRBM domain.

This sequence belongs to the ribonuclease III family. Homodimer. The cofactor is Mg(2+).

It localises to the cytoplasm. The catalysed reaction is Endonucleolytic cleavage to 5'-phosphomonoester.. Functionally, digests double-stranded RNA. Involved in the processing of primary rRNA transcript to yield the immediate precursors to the large and small rRNAs (23S and 16S). Processes some mRNAs, and tRNAs when they are encoded in the rRNA operon. Processes pre-crRNA and tracrRNA of type II CRISPR loci if present in the organism. The sequence is that of Ribonuclease 3 from Delftia acidovorans (strain DSM 14801 / SPH-1).